Here is a 369-residue protein sequence, read N- to C-terminus: 4-hydroxy-3-methylbut-2-en-1-yl diphosphate synthase (flavodoxin) (369 aa).

Cysteine 270, cysteine 273, cysteine 305, and glutamate 312 together coordinate [4Fe-4S] cluster.

Belongs to the IspG family. [4Fe-4S] cluster serves as cofactor.

The catalysed reaction is (2E)-4-hydroxy-3-methylbut-2-enyl diphosphate + oxidized [flavodoxin] + H2O + 2 H(+) = 2-C-methyl-D-erythritol 2,4-cyclic diphosphate + reduced [flavodoxin]. It functions in the pathway isoprenoid biosynthesis; isopentenyl diphosphate biosynthesis via DXP pathway; isopentenyl diphosphate from 1-deoxy-D-xylulose 5-phosphate: step 5/6. Functionally, converts 2C-methyl-D-erythritol 2,4-cyclodiphosphate (ME-2,4cPP) into 1-hydroxy-2-methyl-2-(E)-butenyl 4-diphosphate. The chain is 4-hydroxy-3-methylbut-2-en-1-yl diphosphate synthase (flavodoxin) from Pseudomonas syringae pv. syringae (strain B728a).